A 117-amino-acid chain; its full sequence is uncharacterized protein (117 aa).

A signal peptide spans 1–24 (MMTEFGSAMTLVTGLVAYGAYVKS). Positions 42–117 (EKENFNYNNN…NNQIKRRLFD (76 aa)) are disordered. Residues 46-95 (FNYNNNNNNNNNNNNNNSNNNDNNNNNNSNSNNNNNNNNNNNNNNNNNIN) show a composition bias toward low complexity. N-linked (GlcNAc...) asparagine glycans are attached at residues Asn61 and Asn72. Residues 96–110 (DKQINGTNIFDSNNQ) show a composition bias toward polar residues.

It is found in the secreted. This is an uncharacterized protein from Dictyostelium discoideum (Social amoeba).